The chain runs to 688 residues: Glycine--tRNA ligase beta subunit (688 aa).

It belongs to the class-II aminoacyl-tRNA synthetase family. Tetramer of two alpha and two beta subunits.

The protein localises to the cytoplasm. It catalyses the reaction tRNA(Gly) + glycine + ATP = glycyl-tRNA(Gly) + AMP + diphosphate. The chain is Glycine--tRNA ligase beta subunit from Desulforudis audaxviator (strain MP104C).